A 401-amino-acid polypeptide reads, in one-letter code: Tyrosine--tRNA ligase (401 aa).

The 'HIGH' region motif lies at 42 to 51 (PTAPDLHLGH). The short motif at 226 to 230 (KMSKS) is the 'KMSKS' region element. An ATP-binding site is contributed by lysine 229. Residues 336–397 (IALAQLLKQI…GKRRIAKLSI (62 aa)) form the S4 RNA-binding domain.

This sequence belongs to the class-I aminoacyl-tRNA synthetase family. TyrS type 2 subfamily. As to quaternary structure, homodimer.

Its subcellular location is the cytoplasm. It carries out the reaction tRNA(Tyr) + L-tyrosine + ATP = L-tyrosyl-tRNA(Tyr) + AMP + diphosphate + H(+). Catalyzes the attachment of tyrosine to tRNA(Tyr) in a two-step reaction: tyrosine is first activated by ATP to form Tyr-AMP and then transferred to the acceptor end of tRNA(Tyr). In Legionella pneumophila subsp. pneumophila (strain Philadelphia 1 / ATCC 33152 / DSM 7513), this protein is Tyrosine--tRNA ligase.